Here is a 311-residue protein sequence, read N- to C-terminus: tRNA dimethylallyltransferase (311 aa).

13 to 20 contributes to the ATP binding site; it reads GPTASGKT. 15 to 20 provides a ligand contact to substrate; it reads TASGKT. Interaction with substrate tRNA regions lie at residues 38-41 and 166-170; these read DSMQ and QRGLR.

The protein belongs to the IPP transferase family. As to quaternary structure, monomer. It depends on Mg(2+) as a cofactor.

The catalysed reaction is adenosine(37) in tRNA + dimethylallyl diphosphate = N(6)-dimethylallyladenosine(37) in tRNA + diphosphate. Catalyzes the transfer of a dimethylallyl group onto the adenine at position 37 in tRNAs that read codons beginning with uridine, leading to the formation of N6-(dimethylallyl)adenosine (i(6)A). The protein is tRNA dimethylallyltransferase of Staphylococcus aureus (strain MSSA476).